Reading from the N-terminus, the 406-residue chain is Lysophospholipid transporter LplT (406 aa).

11 helical membrane passes run 16-36, 53-73, 91-111, 139-159, 164-184, 227-247, 253-273, 285-305, 310-330, 349-369, and 372-392; these read MVAVLCAQFFSAFGDNALLFA, ILQMAFVATYIVLAPFVGQIA, AGALVICFGLNPFLGYSLVGV, MMEASTIAAILLGSVAGGILA, MAALGVCALVYAIAVIANLFI, LFWGAGVTLRFLLVLWVPVAL, ATPTLLNAMVAIGIVVGAGAA, CLPAGVLIGVMVTIFSLQNSM, LLLIIIGILGGFFVVPLNALL, LGENTAMLFMLGLYSLVVKLG, and VVAVGVGFGVVFALAIALLWG.

Belongs to the major facilitator superfamily. LplT (TC 2.A.1.42) family.

It localises to the cell inner membrane. In terms of biological role, catalyzes the facilitated diffusion of 2-acyl-glycero-3-phosphoethanolamine (2-acyl-GPE) into the cell. The sequence is that of Lysophospholipid transporter LplT from Yersinia pestis bv. Antiqua (strain Antiqua).